Reading from the N-terminus, the 293-residue chain is Glutamine sensor pib2 (293 aa).

A disordered region spans residues 38-75 (APTRQATNGTGSVSGSPNSSSNSTPANQGSLPSHTNPQ). The span at 44–62 (TNGTGSVSGSPNSSSNSTP) shows a compositional bias: low complexity. Positions 63–75 (ANQGSLPSHTNPQ) are enriched in polar residues. Residues 156 to 220 (DVSVCSFPSC…SCVSCFYEYL (65 aa)) form an FYVE-type; degenerate zinc finger. Positions 178, 181, 212, and 215 each coordinate Zn(2+). Residues 242–256 (APQQATTHPPSQPKN) show a composition bias toward polar residues. A disordered region spans residues 242–276 (APQQATTHPPSQPKNAVSVPIPKMDSTDSKGELPS). Phosphoserine is present on Ser259.

Interacts with the TORC1 complex when activated by glutamine or cysteine.

The protein resides in the vacuole membrane. With respect to regulation, activated by glutamine. Functionally, functions as an intracellular glutamine sensor that directly activates the TORC1 signaling pathway, to promote cell growth when glutamine is available. This is Glutamine sensor pib2 from Schizosaccharomyces pombe (strain 972 / ATCC 24843) (Fission yeast).